The following is a 342-amino-acid chain: Anthranilate phosphoribosyltransferase (342 aa).

Residues glycine 79, 82-83 (GD), threonine 87, 89-92 (NIST), 107-115 (KHCNQRISS), and serine 119 each bind 5-phospho-alpha-D-ribose 1-diphosphate. Glycine 79 provides a ligand contact to anthranilate. A Mg(2+)-binding site is contributed by serine 91. Anthranilate is bound at residue asparagine 110. Arginine 165 provides a ligand contact to anthranilate. Residues aspartate 223 and glutamate 224 each coordinate Mg(2+).

The protein belongs to the anthranilate phosphoribosyltransferase family. In terms of assembly, homodimer. It depends on Mg(2+) as a cofactor.

The catalysed reaction is N-(5-phospho-beta-D-ribosyl)anthranilate + diphosphate = 5-phospho-alpha-D-ribose 1-diphosphate + anthranilate. Its pathway is amino-acid biosynthesis; L-tryptophan biosynthesis; L-tryptophan from chorismate: step 2/5. Catalyzes the transfer of the phosphoribosyl group of 5-phosphorylribose-1-pyrophosphate (PRPP) to anthranilate to yield N-(5'-phosphoribosyl)-anthranilate (PRA). This Buchnera aphidicola subsp. Acyrthosiphon pisum (strain Tuc7) protein is Anthranilate phosphoribosyltransferase.